We begin with the raw amino-acid sequence, 184 residues long: ATP-dependent protease subunit HslV (184 aa).

Threonine 11 is a catalytic residue. Na(+) contacts are provided by alanine 165, cysteine 168, and threonine 171.

Belongs to the peptidase T1B family. HslV subfamily. In terms of assembly, a double ring-shaped homohexamer of HslV is capped on each side by a ring-shaped HslU homohexamer. The assembly of the HslU/HslV complex is dependent on binding of ATP.

It localises to the cytoplasm. The enzyme catalyses ATP-dependent cleavage of peptide bonds with broad specificity.. With respect to regulation, allosterically activated by HslU binding. Protease subunit of a proteasome-like degradation complex believed to be a general protein degrading machinery. The polypeptide is ATP-dependent protease subunit HslV (Zymomonas mobilis subsp. mobilis (strain ATCC 31821 / ZM4 / CP4)).